Reading from the N-terminus, the 196-residue chain is Small ribosomal subunit protein uS4c (196 aa).

One can recognise an S4 RNA-binding domain in the interval 89–169 (MRLDNIIFRL…LPKHLTIDTV (81 aa)).

This sequence belongs to the universal ribosomal protein uS4 family. As to quaternary structure, part of the 30S ribosomal subunit. Contacts protein S5. The interaction surface between S4 and S5 is involved in control of translational fidelity.

It is found in the plastid. The protein resides in the chloroplast. Functionally, one of the primary rRNA binding proteins, it binds directly to 16S rRNA where it nucleates assembly of the body of the 30S subunit. In terms of biological role, with S5 and S12 plays an important role in translational accuracy. The polypeptide is Small ribosomal subunit protein uS4c (rps4) (Stipellula capensis (Cape rice grass)).